The chain runs to 287 residues: Acetyl-coenzyme A carboxylase carboxyl transferase subunit beta (287 aa).

One can recognise a CoA carboxyltransferase N-terminal domain in the interval 36-287 (MWVKCDRCGK…KVLYKILELH (252 aa)). Cysteine 40, cysteine 43, cysteine 59, and cysteine 62 together coordinate Zn(2+). The C4-type zinc finger occupies 40–62 (CDRCGKTLYKKDLDENLKVCKFC).

This sequence belongs to the AccD/PCCB family. As to quaternary structure, acetyl-CoA carboxylase is a heterohexamer composed of biotin carboxyl carrier protein (AccB), biotin carboxylase (AccC) and two subunits each of ACCase subunit alpha (AccA) and ACCase subunit beta (AccD). Requires Zn(2+) as cofactor.

Its subcellular location is the cytoplasm. The catalysed reaction is N(6)-carboxybiotinyl-L-lysyl-[protein] + acetyl-CoA = N(6)-biotinyl-L-lysyl-[protein] + malonyl-CoA. Its pathway is lipid metabolism; malonyl-CoA biosynthesis; malonyl-CoA from acetyl-CoA: step 1/1. Component of the acetyl coenzyme A carboxylase (ACC) complex. Biotin carboxylase (BC) catalyzes the carboxylation of biotin on its carrier protein (BCCP) and then the CO(2) group is transferred by the transcarboxylase to acetyl-CoA to form malonyl-CoA. This is Acetyl-coenzyme A carboxylase carboxyl transferase subunit beta from Clostridium novyi (strain NT).